Reading from the N-terminus, the 431-residue chain is RbAp48-related WD40 repeat-containing protein prw1 (431 aa).

6 WD repeats span residues 127-159 (SHPESVCSAKLMPQDDSCVATVGNYHNDVLVFD), 182-213 (KHTQPCTSVCWNFLSKGTLVSGSQDATLSCWD), 232-263 (SHEKQVSDVRFHYKHQDLLASVSYDQYLHVHD), 279-310 (AHSGPIHSVAFNPHNDFILATCSTDKTIALWD), 323-354 (GHEDIVTKISFSPHEEPILASTSADRRTLVWD), and 380-411 (GHTSCTIDMDWCPNYNWTMATAAEDNILQIWT).

This sequence belongs to the WD repeat HIR1 family. In terms of assembly, heterotetramer of alp13, clr6, prw1 and pst2.

It localises to the nucleus. In terms of biological role, has a role in chromatin assembly and chromosome segregation. Involved in the deacetylation of histones. This chain is RbAp48-related WD40 repeat-containing protein prw1 (prw1), found in Schizosaccharomyces pombe (strain 972 / ATCC 24843) (Fission yeast).